A 1661-amino-acid chain; its full sequence is Cortactin-binding protein 2 (1661 aa).

Disordered regions lie at residues 1 to 27 (MATD…AEAT), 206 to 226 (EKKR…RSTE), 329 to 438 (TVPV…SLHP), 454 to 477 (NAND…SPTS), and 493 to 612 (QALS…LPPK). Positions 124-280 (KMQERMSTQL…EQLKRGNDSK (157 aa)) form a coiled coil. Low complexity predominate over residues 383 to 394 (GPSTGSTPDLPS). The span at 412–426 (SIASQNYSQASSLHS) shows a compositional bias: polar residues. Over residues 454 to 466 (NANDQDQNGNTTQ) the composition is skewed to low complexity. Positions 467–477 (SPPSRDVSPTS) are enriched in polar residues. Arginine 497 is subject to Asymmetric dimethylarginine. ANK repeat units follow at residues 707-737 (GRPT…DINY), 741-770 (DGHS…QVNA), 774-803 (NGFT…NINH), 807-836 (GGQT…DRSV), and 840-869 (DGWT…PACG). A disordered region spans residues 876–896 (EPESDVFDLDGGGERPEGTVK). Residues 910–940 (EGWTAAHIAASKGFKNCLEILCQHGGLEPER) form an ANK 6 repeat. The tract at residues 1444 to 1480 (GKKKGENGAWRKVSTSPRKKSGRFPSPTWSKPDLSDE) is disordered. Serine 1522 carries the phosphoserine modification. Disordered regions lie at residues 1555 to 1597 (RRFD…SNSK) and 1614 to 1661 (PRSK…KPNK). A compositionally biased stretch (polar residues) spans 1580–1597 (KEVSPLSSHQTTECSNSK). Over residues 1622–1636 (SQNTRRSSSSSNTRQ) the composition is skewed to low complexity. A compositionally biased stretch (basic and acidic residues) spans 1643 to 1661 (SKDEIWNLRKNEQVEKPNK).

In terms of assembly, interacts with CTTN/cortactin SH3 domain. Interacts with STRN, STRN4/zinedin and MOB4/phocein; this interactions mediate the association with the STRIPAK core complex and may regulate dendritic spine distribution of the STRIPAK complex in hippocampal neurons. Activation of glutamate receptors weakens the interaction with STRN and STRN4.

The protein localises to the cytoplasm. It is found in the cell cortex. The protein resides in the cell projection. It localises to the dendritic spine. Its function is as follows. Regulates the dendritic spine distribution of CTTN/cortactin in hippocampal neurons, and thus controls dendritic spinogenesis and dendritic spine maintenance. Associates with the striatin-interacting phosphatase and kinase (STRIPAK) core complex to regulate dendritic spine distribution of the STRIPAK complex in hippocampal neurons. The sequence is that of Cortactin-binding protein 2 (CTTNBP2) from Loxodonta africana (African elephant).